The following is a 206-amino-acid chain: MPAAPLTARAIGRIKPLLFVAGLLPFARWFWLGANDGLSANPVEFLTRSSGTWTLVCLLVTLAITPLRRLTGQPALVRLRRMCGLFAFFYGSLHFLAWVWWDRGLDPVSMLQDVGERPFITVGFAAFVLMAALAATSTQWAMRKLGKRWQVLHRAVYAIGLLAILHFWWHKAGKNDLQQPLLYGSVLALLLGWRVAAWWRRRGAAR.

Helical transmembrane passes span 14 to 34 (IKPL…WLGA), 45 to 65 (FLTR…LAIT), 82 to 102 (MCGL…VWWD), 118 to 138 (PFIT…ATST), 149 to 169 (WQVL…HFWW), and 179 to 199 (QPLL…AAWW).

This sequence belongs to the MsrQ family. Heterodimer of a catalytic subunit (MsrP) and a heme-binding subunit (MsrQ). FMN is required as a cofactor. It depends on heme b as a cofactor.

It is found in the cell inner membrane. In terms of biological role, part of the MsrPQ system that repairs oxidized periplasmic proteins containing methionine sulfoxide residues (Met-O), using respiratory chain electrons. Thus protects these proteins from oxidative-stress damage caused by reactive species of oxygen and chlorine generated by the host defense mechanisms. MsrPQ is essential for the maintenance of envelope integrity under bleach stress, rescuing a wide series of structurally unrelated periplasmic proteins from methionine oxidation. MsrQ provides electrons for reduction to the reductase catalytic subunit MsrP, using the quinone pool of the respiratory chain. This is Protein-methionine-sulfoxide reductase heme-binding subunit MsrQ from Bordetella bronchiseptica (strain ATCC BAA-588 / NCTC 13252 / RB50) (Alcaligenes bronchisepticus).